A 235-amino-acid polypeptide reads, in one-letter code: Probable tetraspanin tspA (235 aa).

Topologically, residues 1-18 (MVDTSNLLPQTPRLLKVP) are cytoplasmic. The chain crosses the membrane as a helical span at residues 19–39 (LIILNIILWILGLVLVIVGGI). The Extracellular portion of the chain corresponds to 40 to 68 (CVSFLSNFKDFTKASDAKSALSNLTTSIP). Asn-62 is a glycosylation site (N-linked (GlcNAc...) asparagine). The chain crosses the membrane as a helical span at residues 69–89 (AGVLVIGILFVIFTVVGCFVA). The Cytoplasmic portion of the chain corresponds to 90–93 (YKEK). The helical transmembrane segment at 94 to 114 (LVGLVIYCAVMLILLVILIGV) threads the bilayer. Over 115 to 200 (GGKAITLHND…FSSKIYAVGA (86 aa)) the chain is Extracellular. N-linked (GlcNAc...) asparagine glycans are attached at residues Asn-139, Asn-143, and Asn-160. The chain crosses the membrane as a helical span at residues 201 to 221 (AGLAIGIIELVAILFSLFLII). The Cytoplasmic segment spans residues 222–235 (RICRSPRTRSYDQY).

This sequence belongs to the tetraspanin (TM4SF) family.

The protein localises to the membrane. The protein is Probable tetraspanin tspA (tspA) of Dictyostelium discoideum (Social amoeba).